Here is an 81-residue protein sequence, read N- to C-terminus: Styelin-D (81 aa).

The N-terminal stretch at methionine 1–alanine 22 is a signal peptide. Tryptophan 24 carries the post-translational modification 6'-bromotryptophan. Arginine 26 carries the post-translational modification 3,4-dihydroxyarginine. 4,5-dihydroxylysine is present on residues lysine 27, lysine 30, and lysine 34. Residues tyrosine 36 and tyrosine 37 each carry the 3',4'-dihydroxyphenylalanine modification. Lysine 38 is subject to 4,5-dihydroxylysine. A 5-hydroxylysine modification is found at lysine 40. Tyrosine 41 and tyrosine 42 each carry 3',4'-dihydroxyphenylalanine. A 5-hydroxylysine modification is found at lysine 44. A Leucine amide modification is found at leucine 54. Positions aspartate 56 to glutamine 81 are cleaved as a propeptide — removed in mature form.

Contains L-DOPA (3',4'-dihydroxyphenylalanine). In terms of tissue distribution, hemocytes and pharyngeal tissues.

Its subcellular location is the secreted. Its function is as follows. Bactericidal against several Gram-positive and Gram-negative bacteria. Plays a significant role in the innate immune mechanisms of S.clava. The polypeptide is Styelin-D (Styela clava (Sea squirt)).